The primary structure comprises 102 residues: Small ribosomal subunit protein uS10 (102 aa).

Belongs to the universal ribosomal protein uS10 family. In terms of assembly, part of the 30S ribosomal subunit.

Its function is as follows. Involved in the binding of tRNA to the ribosomes. The protein is Small ribosomal subunit protein uS10 of Heliobacterium modesticaldum (strain ATCC 51547 / Ice1).